Here is a 186-residue protein sequence, read N- to C-terminus: ADP compounds hydrolase NudE (186 aa).

Glutamate 40 provides a ligand contact to substrate. The region spanning 45–172 (TNREAVMIVP…DFNEARNVSA (128 aa)) is the Nudix hydrolase domain. The Nudix box motif lies at 80–101 (GLIDPGESVYEAANRELKEEVG). Residues glutamate 95 and glutamate 99 each contribute to the a divalent metal cation site. A substrate-binding site is contributed by serine 118.

The protein belongs to the Nudix hydrolase family. Homodimer. Requires Mg(2+) as cofactor.

It catalyses the reaction ADP-D-ribose + H2O = D-ribose 5-phosphate + AMP + 2 H(+). Its function is as follows. Active on adenosine(5')triphospho(5')adenosine (Ap3A), ADP-ribose, NADH, adenosine(5')diphospho(5')adenosine (Ap2A). This chain is ADP compounds hydrolase NudE (nudE), found in Escherichia coli (strain K12).